Here is a 173-residue protein sequence, read N- to C-terminus: Mesencephalic astrocyte-derived neurotrophic factor homolog (173 aa).

The first 22 residues, 1–22 (MKTWHMVVVIGFLATLAQTSLA), serve as a signal peptide directing secretion. Intrachain disulfides connect Cys-28–Cys-114, Cys-31–Cys-103, Cys-61–Cys-72, and Cys-148–Cys-151.

The protein belongs to the ARMET family.

The protein resides in the secreted. Required during the maturation of the embryonic nervous system for maintenance of neuronal and cuticular connectivity. Essential for maintenance of dopaminergic neurons and dopamine levels. This chain is Mesencephalic astrocyte-derived neurotrophic factor homolog, found in Drosophila simulans (Fruit fly).